A 364-amino-acid polypeptide reads, in one-letter code: B3 domain-containing protein At5g38490 (364 aa).

The interval Ala-148–Lys-202 is disordered. A DNA-binding region (TF-B3) is located at residues Phe-260–Glu-364.

It localises to the nucleus. This Arabidopsis thaliana (Mouse-ear cress) protein is B3 domain-containing protein At5g38490.